The primary structure comprises 466 residues: Coagulation factor VII (466 aa).

Residues 1–20 (MVSQALRLLCLLLGLQGCLA) form the signal peptide. Residues 21–60 (AGGVAEASGGETRDXXWKPGPHRVFITQEEAHGVLHRRRR) constitute a propeptide that is removed on maturation. In terms of domain architecture, Gla spans 61–105 (ANAFLEELRPGSLERECKEEQCSFEEAREIFKDLERTKLFWISYS). 4-carboxyglutamate is present on residues Glu66, Glu67, Glu74, Glu76, Glu79, Glu80, Glu85, Glu86, Glu89, and Glu95. A disulfide bond links Cys77 and Cys82. The 37-residue stretch at 106 to 142 (DGDQCASSPCQNGGSCKDQLQSYICFCLPAFEGRNCE) folds into the EGF-like 1; calcium-binding domain. Intrachain disulfides connect Cys110–Cys121, Cys115–Cys130, Cys132–Cys141, Cys151–Cys162, Cys158–Cys172, Cys174–Cys187, Cys195–Cys322, Cys219–Cys224, Cys238–Cys254, and Cys370–Cys389. Ser112 carries O-linked (Glc...) serine; alternate glycosylation. The O-linked (Xyl...) serine; alternate glycan is linked to Ser112. O-linked (Fuc) serine glycosylation is present at Ser120. Asp123 is subject to (3R)-3-hydroxyaspartate. An EGF-like 2 domain is found at 147 to 188 (DQLICVNENGGCEQYCSDHTGTKRSCRCHEGYSLLADGVSCT). Asn205 carries N-linked (GlcNAc...) asparagine glycosylation. The Peptidase S1 domain occupies 213–452 (IVGGKVCPKG…YIEWLQKLMR (240 aa)). Residues His253 and Asp302 each act as charge relay system in the active site. The N-linked (GlcNAc...) asparagine glycan is linked to Asn382. Asp398 contacts substrate. Cys400 and Cys428 are joined by a disulfide. The active-site Charge relay system is Ser404.

This sequence belongs to the peptidase S1 family. Heterodimer of a light chain and a heavy chain linked by a disulfide bond. In terms of processing, the vitamin K-dependent, enzymatic carboxylation of some glutamate residues allows the modified protein to bind calcium. Post-translationally, the iron and 2-oxoglutarate dependent 3-hydroxylation of aspartate and asparagine is (R) stereospecific within EGF domains. O-glycosylated. O-fucosylated by POFUT1 on a conserved serine or threonine residue found in the consensus sequence C2-X(4,5)-[S/T]-C3 of EGF domains, where C2 and C3 are the second and third conserved cysteines. In terms of processing, can be either O-glucosylated or O-xylosylated at Ser-112 by POGLUT1.

The protein localises to the secreted. It carries out the reaction Selective cleavage of Arg-|-Ile bond in factor X to form factor Xa.. Initiates the extrinsic pathway of blood coagulation. Serine protease that circulates in the blood in a zymogen form. Factor VII is converted to factor VIIa by factor Xa, factor XIIa, factor IXa, or thrombin by minor proteolysis. In the presence of tissue factor and calcium ions, factor VIIa then converts factor X to factor Xa by limited proteolysis. Factor VIIa also converts factor IX to factor IXa in the presence of tissue factor and calcium. This chain is Coagulation factor VII (F7), found in Pan troglodytes (Chimpanzee).